A 233-amino-acid polypeptide reads, in one-letter code: MQKPIIEFRNVSKKFGNKTPISKVSFIVKKNNITTLIGPNGAGKTTIVRLMLGLEKPTSGEVIIDRKLKIGYVPQKFGLTTDIPITVKKFLDLLAPSHFNKNIKEISSFIDLEHIKKQEISKLSGGQFQKVVLACSIINNPDLIILDEPLQSLDVTSQQEFYQLIHFIRKKLNITVFMISHDLFTVIKNSDQVICLNGHICCSGVPHEITPNSEFSNALSSLGFYTHNHDHKH.

Residues 6–222 (IEFRNVSKKF…SEFSNALSSL (217 aa)) form the ABC transporter domain. Residue 38–45 (GPNGAGKT) coordinates ATP.

This sequence belongs to the ABC transporter superfamily. Zinc importer (TC 3.A.1.15.5) family. In terms of assembly, the complex is composed of two ATP-binding proteins (ZnuC), two transmembrane proteins (ZnuB) and a solute-binding protein (ZnuA).

The protein resides in the cell inner membrane. It catalyses the reaction Zn(2+)(out) + ATP(in) + H2O(in) = Zn(2+)(in) + ADP(in) + phosphate(in) + H(+)(in). Its function is as follows. Part of the ABC transporter complex ZnuABC involved in zinc import. Responsible for energy coupling to the transport system. This Rickettsia prowazekii (strain Madrid E) protein is Zinc import ATP-binding protein ZnuC.